The sequence spans 513 residues: Na(+)/H(+) antiporter NhaB (513 aa).

Helical transmembrane passes span 23–43 (LALI…PFVA), 52–72 (IFTL…LLAI), 97–117 (LLLM…LFIF), 120–140 (LLLS…AAAF), 144–164 (FLDA…FYGI), 202–222 (LMMH…VGEP), 238–258 (FFLR…LTCL), 303–323 (AIIG…VGLI), 348–368 (TESL…AVII), 391–411 (LFYI…VGTI), 447–467 (ATPN…APLI), and 475–495 (VWMA…CVEF).

The protein belongs to the NhaB Na(+)/H(+) (TC 2.A.34) antiporter family.

The protein localises to the cell inner membrane. The catalysed reaction is 2 Na(+)(in) + 3 H(+)(out) = 2 Na(+)(out) + 3 H(+)(in). Na(+)/H(+) antiporter that extrudes sodium in exchange for external protons. This Escherichia coli O127:H6 (strain E2348/69 / EPEC) protein is Na(+)/H(+) antiporter NhaB.